The primary structure comprises 280 residues: Mitochondrial outer membrane protein porin 2 (280 aa).

It belongs to the eukaryotic mitochondrial porin (TC 1.B.8.1) family. As to expression, expressed in roots, stems, leaves, palea, lemma and pollen.

The protein resides in the mitochondrion outer membrane. Functionally, forms a channel through the mitochondrial outer membrane that allows diffusion of small hydrophilic molecules. The channel adopts an open conformation at low or zero membrane potential and a closed conformation at potentials above 30-40 mV. The open state has a weak anion selectivity whereas the closed state is cation-selective. The polypeptide is Mitochondrial outer membrane protein porin 2 (VDAC2) (Oryza sativa subsp. japonica (Rice)).